Here is a 336-residue protein sequence, read N- to C-terminus: Dihydroorotate dehydrogenase (quinone) (336 aa).

FMN contacts are provided by residues 62–66 (AGLDK) and Thr86. Residue Lys66 participates in substrate binding. Residue 111–115 (NRMGF) participates in substrate binding. The FMN site is built by Asn139 and Asn172. Asn172 provides a ligand contact to substrate. Ser175 serves as the catalytic Nucleophile. Asn177 contributes to the substrate binding site. Lys217 and Thr245 together coordinate FMN. Residue 246–247 (NT) participates in substrate binding. Residues Gly268, Gly297, and 318–319 (YT) each bind FMN.

The protein belongs to the dihydroorotate dehydrogenase family. Type 2 subfamily. As to quaternary structure, monomer. FMN serves as cofactor.

The protein localises to the cell membrane. The catalysed reaction is (S)-dihydroorotate + a quinone = orotate + a quinol. It participates in pyrimidine metabolism; UMP biosynthesis via de novo pathway; orotate from (S)-dihydroorotate (quinone route): step 1/1. In terms of biological role, catalyzes the conversion of dihydroorotate to orotate with quinone as electron acceptor. In Vibrio parahaemolyticus serotype O3:K6 (strain RIMD 2210633), this protein is Dihydroorotate dehydrogenase (quinone).